Reading from the N-terminus, the 270-residue chain is tRNA pseudouridine synthase A (270 aa).

Asp54 acts as the Nucleophile in catalysis. A substrate-binding site is contributed by Tyr112.

Belongs to the tRNA pseudouridine synthase TruA family. Homodimer.

It catalyses the reaction uridine(38/39/40) in tRNA = pseudouridine(38/39/40) in tRNA. Formation of pseudouridine at positions 38, 39 and 40 in the anticodon stem and loop of transfer RNAs. In Bordetella bronchiseptica (strain ATCC BAA-588 / NCTC 13252 / RB50) (Alcaligenes bronchisepticus), this protein is tRNA pseudouridine synthase A.